The chain runs to 445 residues: Homoserine dehydrogenase (445 aa).

NADPH-binding residues include Phe-26, Thr-28, and Val-29. The NAD(+) site is built by Val-29 and Ala-58. Val-29 lines the NADP(+) pocket. Residue Lys-119 coordinates NADPH. NADP(+) is bound at residue Lys-119. Positions 143, 146, 148, and 150 each coordinate Na(+). NADP(+) is bound by residues Gly-201 and Glu-204. L-homoserine-binding residues include Glu-204 and Asp-215. Catalysis depends on Lys-219, which acts as the Proton donor. Gly-321 is a binding site for NADPH. Residue Gly-321 participates in NAD(+) binding. Gly-321 is a binding site for NADP(+). The region spanning 368-445 is the ACT domain; that stretch reads HLDMDVEDRV…INSVIRLERD (78 aa).

It belongs to the homoserine dehydrogenase family. It depends on a metal cation as a cofactor.

It catalyses the reaction L-homoserine + NADP(+) = L-aspartate 4-semialdehyde + NADPH + H(+). It carries out the reaction L-homoserine + NAD(+) = L-aspartate 4-semialdehyde + NADH + H(+). It participates in amino-acid biosynthesis; L-methionine biosynthesis via de novo pathway; L-homoserine from L-aspartate: step 3/3. It functions in the pathway amino-acid biosynthesis; L-threonine biosynthesis; L-threonine from L-aspartate: step 3/5. Its activity is regulated as follows. Feedback inhibition by threonine. In terms of biological role, catalyzes the conversion of L-aspartate-beta-semialdehyde (L-Asa) to L-homoserine (L-Hse), the third step in the biosynthesis of threonine and methionine from aspartate. The sequence is that of Homoserine dehydrogenase (hom) from Corynebacterium glutamicum (strain ATCC 13032 / DSM 20300 / JCM 1318 / BCRC 11384 / CCUG 27702 / LMG 3730 / NBRC 12168 / NCIMB 10025 / NRRL B-2784 / 534).